Reading from the N-terminus, the 330-residue chain is Phosphate acyltransferase (330 aa).

The protein belongs to the PlsX family. Homodimer. Probably interacts with PlsY.

Its subcellular location is the cytoplasm. It catalyses the reaction a fatty acyl-[ACP] + phosphate = an acyl phosphate + holo-[ACP]. It functions in the pathway lipid metabolism; phospholipid metabolism. Functionally, catalyzes the reversible formation of acyl-phosphate (acyl-PO(4)) from acyl-[acyl-carrier-protein] (acyl-ACP). This enzyme utilizes acyl-ACP as fatty acyl donor, but not acyl-CoA. This Streptococcus pneumoniae (strain ATCC 700669 / Spain 23F-1) protein is Phosphate acyltransferase.